Consider the following 446-residue polypeptide: Calcium-binding and coiled-coil domain-containing protein 2 (446 aa).

Positions 133 to 136 (ILVV) match the CLIR motif. The stretch at 137 to 349 (TTQGEVEEIE…RENSRLLSYM (213 aa)) forms a coiled coil. The LIR-like signature appears at 203-206 (DYWE). The interval 362 to 390 (TSDEGGARQNPGLAYGNPYSGIQESSSPS) is disordered. The interaction with LGALS8 stretch occupies residues 371–381 (NPGLAYGNPYS). Polar residues predominate over residues 381 to 390 (SGIQESSSPS). Residues 395 to 446 (KKCPICKADDICDHTLEQQQMQPLCFNCPICDKIFPATEKQIFEDHVFCHSL) form an interaction with MYO6 region. A UBZ1-type zinc finger spans residues 419–444 (CFNCPICDKIFPATEKQIFEDHVFCH). Zn(2+)-binding residues include C422, C425, H440, and H444. A Phosphoserine modification is found at S445.

Belongs to the CALCOCO family. Dimer. Part of a complex consisting of CALCOCO2, TAX1BP1 and MYO6. Interacts with MYO6. Interacts with GEMIN4. Interacts with ATG8 family members MAP1LC3A, MAP1LC3B, GABARAP, GABARAPL1 and GABARAPL2. Interacts with ATG8 family member MAP1LC3C. Interacts with LGALS8. Interacts with TOM1; the interaction is indirect and is mediated by MYO6, which acts as a bridge between TOM1 and CALCOCO2. Interacts with AZI2. In terms of assembly, (Microbial infection) Interacts with Lassa virus protein Z. As to quaternary structure, (Microbial infection) Interacts with Mopeia virus protein Z. In terms of processing, (Microbial infection) Cleaved by S.pyogenes SpeB protease; leading to its degradation. Degradation by SpeB prevents autophagy, promoting to S.pyogenes intracellular replication. As to expression, expressed in all tissues tested with highest expression in skeletal muscle and lowest in brain.

The protein localises to the cytoplasm. The protein resides in the perinuclear region. Its subcellular location is the cytoskeleton. It is found in the cytoplasmic vesicle. It localises to the autophagosome membrane. Functionally, xenophagy-specific receptor required for autophagy-mediated intracellular bacteria degradation. Acts as an effector protein of galectin-sensed membrane damage that restricts the proliferation of infecting pathogens such as Salmonella typhimurium upon entry into the cytosol by targeting LGALS8-associated bacteria for autophagy. Initially orchestrates bacteria targeting to autophagosomes and subsequently ensures pathogen degradation by regulating pathogen-containing autophagosome maturation. Bacteria targeting to autophagosomes relies on its interaction with MAP1LC3A, MAP1LC3B and/or GABARAPL2, whereas regulation of pathogen-containing autophagosome maturation requires the interaction with MAP3LC3C. May play a role in ruffle formation and actin cytoskeleton organization and seems to negatively regulate constitutive secretion. This Homo sapiens (Human) protein is Calcium-binding and coiled-coil domain-containing protein 2 (CALCOCO2).